Consider the following 520-residue polypeptide: MADSCADTVDGEIKGFSEGQQLNITKNEDLEQTKPQKEAIANTEESSACVSQIKQDLAPCKDPPTTTTASLEDDAKATSSASVTSKSQDESEVINSQSYTPSQSEATPSFSMASLEFSEENNGVPPDGPLSSAKSARDGNQVSVQENEGAVAGAMRPAEPTMPAYYFVKWITWKEKKTAVITQSENGPCPLIAIMNILLLRWKVKFPAQTEVVTTEELMAHLGECVLSIKPREKAEGMELNFQQNMSDAMAVLPKLSTGLDVNVRFTGVSDFEYTPECIVFDLLDIPLYHGWLVDPQSPEVVSAVGKLSYNQLVEKIIEFKHSTDSSQVSEGLIAEQFLESTATQLSYHGLCELNTTAKEGELSVFFRNNHFSTMIKHKGHLYLLVTDQGFLQEESVVWESLHNVEGDGNFCDSDFRLCHPSQKPSAAAAQPSTQQQQQMQIDQDYLVAMSLQQEQGEAPGPLSDLELARQLQQEEYQQPQTQQQQQQQPSAGQMRGQATSPQGGQRRREKKEETDCCIL.

The disordered stretch occupies residues 1–155 (MADSCADTVD…ENEGAVAGAM (155 aa)). Residues 26-37 (KNEDLEQTKPQK) show a composition bias toward basic and acidic residues. Residues 43–54 (TEESSACVSQIK) show a composition bias toward polar residues. Residues 77-86 (ATSSASVTSK) show a composition bias toward low complexity. Polar residues-rich tracts occupy residues 93-112 (VINSQSYTPSQSEATPSFSM) and 132-146 (SAKSARDGNQVSVQE). The active-site Nucleophile is Cys189. Catalysis depends on His371, which acts as the Proton acceptor. Disordered regions lie at residues 422–441 (SQKPSAAAAQPSTQQQQQMQ) and 467–520 (ELAR…CCIL). A ubiquitin-binding domain (UBD) region spans residues 441 to 479 (QIDQDYLVAMSLQQEQGEAPGPLSDLELARQLQQEEYQQ). Positions 469–498 (ARQLQQEEYQQPQTQQQQQQQPSAGQMRGQ) are enriched in low complexity. Basic and acidic residues predominate over residues 511 to 520 (KKEETDCCIL).

It belongs to the MINDY deubiquitinase family. FAM63 subfamily.

It catalyses the reaction Thiol-dependent hydrolysis of ester, thioester, amide, peptide and isopeptide bonds formed by the C-terminal Gly of ubiquitin (a 76-residue protein attached to proteins as an intracellular targeting signal).. Hydrolase that can specifically remove 'Lys-48'-linked conjugated ubiquitin from proteins. May play a regulatory role at the level of protein turnover. The polypeptide is Ubiquitin carboxyl-terminal hydrolase MINDY-1 (mindy1) (Danio rerio (Zebrafish)).